Here is a 227-residue protein sequence, read N- to C-terminus: Thymidylate kinase (227 aa).

7 to 14 (GIEGSGKT) serves as a coordination point for ATP.

This sequence belongs to the thymidylate kinase family.

The enzyme catalyses dTMP + ATP = dTDP + ADP. Its function is as follows. Phosphorylation of dTMP to form dTDP in both de novo and salvage pathways of dTTP synthesis. In Desulforapulum autotrophicum (strain ATCC 43914 / DSM 3382 / VKM B-1955 / HRM2) (Desulfobacterium autotrophicum), this protein is Thymidylate kinase.